Consider the following 177-residue polypeptide: Large ribosomal subunit protein uL6 (177 aa).

The protein belongs to the universal ribosomal protein uL6 family. In terms of assembly, part of the 50S ribosomal subunit.

Functionally, this protein binds to the 23S rRNA, and is important in its secondary structure. It is located near the subunit interface in the base of the L7/L12 stalk, and near the tRNA binding site of the peptidyltransferase center. The chain is Large ribosomal subunit protein uL6 from Rickettsia typhi (strain ATCC VR-144 / Wilmington).